The following is a 108-amino-acid chain: uncharacterized protein (108 aa).

It to M.jannaschii MJ1245 and M.thermoautotrophicum MTH1110.

This is an uncharacterized protein from Methanocaldococcus jannaschii (strain ATCC 43067 / DSM 2661 / JAL-1 / JCM 10045 / NBRC 100440) (Methanococcus jannaschii).